A 240-amino-acid chain; its full sequence is Pyridoxine 5'-phosphate synthase (240 aa).

Asn-7 provides a ligand contact to 3-amino-2-oxopropyl phosphate. 9–10 contributes to the 1-deoxy-D-xylulose 5-phosphate binding site; that stretch reads DH. Arg-18 is a 3-amino-2-oxopropyl phosphate binding site. His-43 (proton acceptor) is an active-site residue. Arg-45 and His-50 together coordinate 1-deoxy-D-xylulose 5-phosphate. Residue Glu-70 is the Proton acceptor of the active site. Thr-100 is a binding site for 1-deoxy-D-xylulose 5-phosphate. The Proton donor role is filled by His-191. Residues Gly-192 and 213–214 each bind 3-amino-2-oxopropyl phosphate; that span reads GH.

This sequence belongs to the PNP synthase family. Homooctamer; tetramer of dimers.

It is found in the cytoplasm. The catalysed reaction is 3-amino-2-oxopropyl phosphate + 1-deoxy-D-xylulose 5-phosphate = pyridoxine 5'-phosphate + phosphate + 2 H2O + H(+). It participates in cofactor biosynthesis; pyridoxine 5'-phosphate biosynthesis; pyridoxine 5'-phosphate from D-erythrose 4-phosphate: step 5/5. In terms of biological role, catalyzes the complicated ring closure reaction between the two acyclic compounds 1-deoxy-D-xylulose-5-phosphate (DXP) and 3-amino-2-oxopropyl phosphate (1-amino-acetone-3-phosphate or AAP) to form pyridoxine 5'-phosphate (PNP) and inorganic phosphate. This is Pyridoxine 5'-phosphate synthase from Cyanothece sp. (strain PCC 7425 / ATCC 29141).